The primary structure comprises 389 residues: Methane monooxygenase component A beta chain (389 aa).

As to quaternary structure, m.capsulatus has two forms of methane monooxygenase, a soluble and a membrane-bound type. The soluble type consists of four components (A to D): protein A, comprising three chains, in an alpha-2, beta-2, gamma-2 configuration, is a nonheme iron protein containing an unusual mu-hydroxo bridge structure at its active site and interacts with both oxygen and methane.

It carries out the reaction methane + NADH + O2 + H(+) = methanol + NAD(+) + H2O. The catalysed reaction is methane + NADPH + O2 + H(+) = methanol + NADP(+) + H2O. Its function is as follows. Responsible for the initial oxygenation of methane to methanol in methanotrophs. It also catalyzes the monohydroxylation of a variety of unactivated alkenes, alicyclic, aromatic and heterocyclic compounds. In Methylococcus capsulatus (strain ATCC 33009 / NCIMB 11132 / Bath), this protein is Methane monooxygenase component A beta chain (mmoY).